The following is a 172-amino-acid chain: NADH-quinone oxidoreductase subunit B (172 aa).

Residues Cys-46, Cys-47, Cys-111, and Cys-141 each contribute to the [4Fe-4S] cluster site.

This sequence belongs to the complex I 20 kDa subunit family. As to quaternary structure, NDH-1 is composed of 14 different subunits. Subunits NuoB, C, D, E, F, and G constitute the peripheral sector of the complex. The cofactor is [4Fe-4S] cluster.

The protein resides in the cell membrane. The enzyme catalyses a quinone + NADH + 5 H(+)(in) = a quinol + NAD(+) + 4 H(+)(out). NDH-1 shuttles electrons from NADH, via FMN and iron-sulfur (Fe-S) centers, to quinones in the respiratory chain. The immediate electron acceptor for the enzyme in this species is believed to be a menaquinone. Couples the redox reaction to proton translocation (for every two electrons transferred, four hydrogen ions are translocated across the cytoplasmic membrane), and thus conserves the redox energy in a proton gradient. This Bacillus anthracis (strain A0248) protein is NADH-quinone oxidoreductase subunit B.